A 367-amino-acid polypeptide reads, in one-letter code: Leucine-rich repeat-containing protein 28 (367 aa).

9 LRR repeats span residues 16–36 (KHKN…ELLK), 42–63 (YLER…LAQK), 66–87 (NLVE…IGSL), 89–110 (KLQC…IGRL), 112–133 (ALRH…VGDL), 135–156 (ELQT…LHMC), 158–180 (SLQY…CQLP), 181–202 (SLNE…LGRS), and 204–226 (ELQY…LYNK).

This is Leucine-rich repeat-containing protein 28 (LRRC28) from Homo sapiens (Human).